The following is a 96-amino-acid chain: Co-chaperonin GroES (96 aa).

This sequence belongs to the GroES chaperonin family. Heptamer of 7 subunits arranged in a ring. Interacts with the chaperonin GroEL.

The protein localises to the cytoplasm. In terms of biological role, together with the chaperonin GroEL, plays an essential role in assisting protein folding. The GroEL-GroES system forms a nano-cage that allows encapsulation of the non-native substrate proteins and provides a physical environment optimized to promote and accelerate protein folding. GroES binds to the apical surface of the GroEL ring, thereby capping the opening of the GroEL channel. This is Co-chaperonin GroES from Holospora obtusa.